The following is a 336-amino-acid chain: Tetraacyldisaccharide 4'-kinase (336 aa).

Position 60–67 (60–67 (TVGGTGKT)) interacts with ATP.

The protein belongs to the LpxK family.

It catalyses the reaction a lipid A disaccharide + ATP = a lipid IVA + ADP + H(+). The protein operates within glycolipid biosynthesis; lipid IV(A) biosynthesis; lipid IV(A) from (3R)-3-hydroxytetradecanoyl-[acyl-carrier-protein] and UDP-N-acetyl-alpha-D-glucosamine: step 6/6. Functionally, transfers the gamma-phosphate of ATP to the 4'-position of a tetraacyldisaccharide 1-phosphate intermediate (termed DS-1-P) to form tetraacyldisaccharide 1,4'-bis-phosphate (lipid IVA). In Pseudomonas fluorescens (strain ATCC BAA-477 / NRRL B-23932 / Pf-5), this protein is Tetraacyldisaccharide 4'-kinase.